Reading from the N-terminus, the 334-residue chain is HTH-type transcriptional repressor PurR (334 aa).

An HTH lacI-type domain is found at 2-56 (ATIKDVARLAGVSTTTVSHVINKTRFVAEATQEKVMKAVDELNYAPSAVARSLKC). Positions 4-23 (IKDVARLAGVSTTTVSHVIN) form a DNA-binding region, H-T-H motif. The DNA-binding element occupies 48–56 (SAVARSLKC). Residues Phe73, Lys189, Phe220, and Asp274 each coordinate hypoxanthine.

In terms of assembly, homodimer.

Its pathway is purine metabolism; purine nucleotide biosynthesis [regulation]. Its function is as follows. Is the main repressor of the genes involved in the de novo synthesis of purine nucleotides, regulating purB, purC, purEK, purF, purHD, purL, purMN and guaBA expression. PurR is allosterically activated to bind its cognate DNA by binding the purine corepressors, hypoxanthine or guanine, thereby effecting transcription repression. The sequence is that of HTH-type transcriptional repressor PurR from Vibrio vulnificus (strain CMCP6).